Consider the following 452-residue polypeptide: Chromosomal replication initiator protein DnaA (452 aa).

The tract at residues 1 to 80 (MSSTVSTLWR…NNDQFMVKIQ (80 aa)) is domain I, interacts with DnaA modulators. The interval 80–114 (QDGIKPTEKTTTNVEQKTQNENCHNEITSQQNYRS) is domain II. The domain III, AAA+ region stretch occupies residues 115–332 (YLNKNHVFDN…GALNRVHAHA (218 aa)). The ATP site is built by Gly160, Gly162, Lys163, and Thr164. The segment at 333 to 452 (EFTGKAITID…WSNLIRTLSV (120 aa)) is domain IV, binds dsDNA.

Belongs to the DnaA family. In terms of assembly, oligomerizes as a right-handed, spiral filament on DNA at oriC.

It is found in the cytoplasm. In terms of biological role, plays an essential role in the initiation and regulation of chromosomal replication. ATP-DnaA binds to the origin of replication (oriC) to initiate formation of the DNA replication initiation complex once per cell cycle. Binds the DnaA box (a 9 base pair repeat at the origin) and separates the double-stranded (ds)DNA. Forms a right-handed helical filament on oriC DNA; dsDNA binds to the exterior of the filament while single-stranded (ss)DNA is stabiized in the filament's interior. The ATP-DnaA-oriC complex binds and stabilizes one strand of the AT-rich DNA unwinding element (DUE), permitting loading of DNA polymerase. After initiation quickly degrades to an ADP-DnaA complex that is not apt for DNA replication. Binds acidic phospholipids. This chain is Chromosomal replication initiator protein DnaA, found in Histophilus somni (strain 129Pt) (Haemophilus somnus).